Here is a 204-residue protein sequence, read N- to C-terminus: Bombinin-like peptides 1 (204 aa).

The or 18 signal peptide spans 1-16; the sequence is MNFKYIVAVSILIASA. An asparagine amide mark is found at asparagine 70 and asparagine 133.

Belongs to the bombinin family. In terms of tissue distribution, expressed by the skin glands.

It is found in the secreted. Functionally, has antimicrobial activity, but no hemolytic activity. Preference on killing Gram-negative non-enteric bacteria. This chain is Bombinin-like peptides 1, found in Bombina orientalis (Oriental fire-bellied toad).